The primary structure comprises 367 residues: Inactive serine protease 39 (367 aa).

The signal sequence occupies residues 1-31; it reads MWGSRAQQSGPDRGGACLLAAFLLCFSLLHA. A Peptidase S1 domain is found at 68–312; sequence IYGGQIAKAE…FSDWIKQKKA (245 aa). 4 cysteine pairs are disulfide-bonded: Cys93-Cys109, Cys192-Cys269, Cys225-Cys248, and Cys259-Cys287.

This sequence belongs to the peptidase S1 family. As to expression, expressed in testis. More specifically, abundantly expressed in the haploid round spermatid.

The protein resides in the cytoplasmic vesicle. Its subcellular location is the secretory vesicle. The protein localises to the acrosome. It localises to the secreted. May play an important role in the sperm/egg interaction; released during the acrosome reaction. This chain is Inactive serine protease 39 (Prss39), found in Mus musculus (Mouse).